The chain runs to 203 residues: bMERB domain-containing protein 1 (203 aa).

A bMERB domain is found at 3–149; it reads LKQSLSVHLE…EQEEDKEMAD (147 aa). The tract at residues 160-186 is disordered; it reads KVTKSSASSRAEKKAEPPPSKPTVAKT.

This is bMERB domain-containing protein 1 (Bmerb1) from Rattus norvegicus (Rat).